A 308-amino-acid chain; its full sequence is Ribonuclease HIII (308 aa).

The region spanning 88–304 (FHCIGSDEAG…RDKAIHLMNQ (217 aa)) is the RNase H type-2 domain. The a divalent metal cation site is built by aspartate 94, glutamate 95, and aspartate 199.

Belongs to the RNase HII family. RnhC subfamily. It depends on Mn(2+) as a cofactor. The cofactor is Mg(2+).

The protein resides in the cytoplasm. The enzyme catalyses Endonucleolytic cleavage to 5'-phosphomonoester.. Endonuclease that specifically degrades the RNA of RNA-DNA hybrids. The sequence is that of Ribonuclease HIII from Staphylococcus epidermidis (strain ATCC 12228 / FDA PCI 1200).